A 1385-amino-acid polypeptide reads, in one-letter code: Contactin-associated protein 1 (1385 aa).

The signal sequence occupies residues 1–20 (MMSLRLFSILLATVVSGAWG). At 21–1284 (WGYYGCNEEL…PYYHDDGWIA (1264 aa)) the chain is on the extracellular side. Positions 26 to 169 (CNEELVGPLY…IGLRLGIYGC (144 aa)) constitute an F5/8 type C domain. Residues Cys-26 and Cys-169 are joined by a disulfide bond. N-linked (GlcNAc...) asparagine glycans are attached at residues Asn-121, Asn-129, and Asn-277. Laminin G-like domains are found at residues 204-356 (FKTE…AFRC) and 390-539 (FRTW…FDTC). Cys-324 and Cys-356 form a disulfide bridge. 3 N-linked (GlcNAc...) asparagine glycosylation sites follow: Asn-421, Asn-500, and Asn-519. Intrachain disulfides connect Cys-507-Cys-539, Cys-545-Cys-556, Cys-550-Cys-565, and Cys-567-Cys-577. The 33-residue stretch at 545-577 (CSPNMCEHDGRCYQSWDDFICYCELTGYKGVTC) folds into the EGF-like 1 domain. Residues 577 to 796 (CHEPLYKESC…NTISFHTGAA (220 aa)) enclose the Fibrinogen C-terminal domain. 9 N-linked (GlcNAc...) asparagine glycosylation sites follow: Asn-598, Asn-654, Asn-665, Asn-764, Asn-805, Asn-844, Asn-861, Asn-949, and Asn-957. The Laminin G-like 3 domain maps to 814-958 (FRTSAPSGVF…NASEGTFPNC (145 aa)). 4 disulfide bridges follow: Cys-931/Cys-958, Cys-962/Cys-975, Cys-969/Cys-984, and Cys-986/Cys-996. Positions 962–996 (CTHPRFPCFHGGRCVERYSYYTCDCDLTAFDGPYC) constitute an EGF-like 2 domain. Asn-1079 and Asn-1148 each carry an N-linked (GlcNAc...) asparagine glycan. The Laminin G-like 4 domain maps to 1089–1251 (FSTNSAPAVL…VQGELSESNC (163 aa)). A disulfide bond links Cys-1210 and Cys-1251. The chain crosses the membrane as a helical span at residues 1285–1305 (ILLGFLVAFLLLGLVGMLVLF). Residues 1306 to 1385 (YLQNHRYKGS…PQILEESRSE (80 aa)) lie on the Cytoplasmic side of the membrane. The disordered stretch occupies residues 1317–1385 (HTNEPKATHD…PQILEESRSE (69 aa)). Residues 1319-1329 (NEPKATHDSHP) are compositionally biased toward basic and acidic residues. Residues 1334-1367 (PLPPSGPAQAPAPTPAPTQLPTPAPAPAPAPASG) show a composition bias toward pro residues. The SH3-binding signature appears at 1334–1370 (PLPPSGPAQAPAPTPAPTQLPTPAPAPAPAPASGPGP). A Phosphoserine modification is found at Ser-1384.

Belongs to the neurexin family. As to quaternary structure, interacts with CNTN1/contactin in cis form. As to expression, expressed in brain. In myelinated nerve fibers predominantly found in paranodal axoglial junctions. In the internodal region of myelinated axons in the CNS and the PNS also found as a thin line apposing the inner mesaxon of the myelin sheath. In PNS neurons this line forms a circumferential ring that apposes the innermost aspect of Schmidt-Lanterman incisures.

The protein localises to the membrane. It localises to the cell junction. It is found in the paranodal septate junction. In terms of biological role, required, with CNTNAP2, for radial and longitudinal organization of myelinated axons. Plays a role in the formation of functional distinct domains critical for saltatory conduction of nerve impulses in myelinated nerve fibers. Demarcates the paranodal region of the axo-glial junction. In association with contactin involved in the signaling between axons and myelinating glial cells. This is Contactin-associated protein 1 (Cntnap1) from Mus musculus (Mouse).